The chain runs to 187 residues: MSTFPVLAEDIPLRERHVKGRVDPHFRAPKMEMFQRLLLLLLLSMGGTWASKEPLRPRCRPINATLAVEKEGCPVCITVNTTICAGYCPTMTRVLQGVLPALPQVVCNYRDVRFESIRLPGCPRGVNPVVSYAVALSCQCALCRRSTTDCGGPKDHPLTCDDPRFQDSSSSKAPPPSLPSPSRLPGP.

Residues Met1 to Ala50 form the signal peptide. 6 disulfides stabilise this stretch: Cys59–Cys107, Cys73–Cys122, Cys76–Cys160, Cys84–Cys138, Cys88–Cys140, and Cys143–Cys150. Residues Asn63 and Asn80 are each glycosylated (N-linked (GlcNAc...) asparagine). Positions Asp161–Pro187 are disordered. Positions Ala173–Pro187 are enriched in pro residues.

This sequence belongs to the glycoprotein hormones subunit beta family. As to expression, expressed in placenta, testis and pituitary.

It localises to the secreted. The sequence is that of Choriogonadotropin subunit beta variant 1 (CGB1) from Homo sapiens (Human).